We begin with the raw amino-acid sequence, 254 residues long: Isoprenyl transferase (254 aa).

Asp24 is an active-site residue. A Mg(2+)-binding site is contributed by Asp24. Substrate is bound by residues 25-28 (GNGR), Trp29, Arg37, His41, and 69-71 (SSE). Asn72 acts as the Proton acceptor in catalysis. Residues Trp73, Arg75, Arg192, and 198 to 200 (RIS) each bind substrate. Glu211 is a Mg(2+) binding site.

Belongs to the UPP synthase family. As to quaternary structure, homodimer. It depends on Mg(2+) as a cofactor.

In terms of biological role, catalyzes the condensation of isopentenyl diphosphate (IPP) with allylic pyrophosphates generating different type of terpenoids. The chain is Isoprenyl transferase from Bordetella parapertussis (strain 12822 / ATCC BAA-587 / NCTC 13253).